The primary structure comprises 353 residues: Rhodopsin (353 aa).

Over 1–36 (MNGTEGPFFYVPMLNTTGIVRSPYDYPQYYLVNPAA) the chain is Extracellular. N-linked (GlcNAc...) asparagine glycans are attached at residues Asn2 and Asn15. Residues 37-61 (YAALGAYMFLLILLGFPINFLTLYV) form a helical membrane-spanning segment. The Cytoplasmic segment spans residues 62–73 (TIEHKKLRTPLN). A helical transmembrane segment spans residues 74-96 (YILLNLAVANLFMVFGGFTTTMY). Over 97-110 (TSMHGYFVLGRLGC) the chain is Extracellular. A disulfide bond links Cys110 and Cys187. The helical transmembrane segment at 111 to 133 (NLEGFFATLGGEIGLWSLVVLAI) threads the bilayer. The 'Ionic lock' involved in activated form stabilization signature appears at 134–136 (ERW). The Cytoplasmic segment spans residues 134–152 (ERWMVVCKPISNFRFGENH). The helical transmembrane segment at 153 to 173 (AIMGLAFTWIMACACAVPPLV) threads the bilayer. Residues 174 to 202 (GWSRYIPEGMQCSCGVDYYTRAEGFNNES) are Extracellular-facing. Asn200 is a glycosylation site (N-linked (GlcNAc...) asparagine). Residues 203–224 (FVVYMFICHFLIPMAVVFFCYG) traverse the membrane as a helical segment. The Cytoplasmic portion of the chain corresponds to 225-252 (RLLCAVKEAAAAQQESETTQRAEREVTR). A helical membrane pass occupies residues 253-274 (MVVIMVVAFLICWLPYAGVAWW). At 275-286 (IFTHQGSEFGPV) the chain is on the extracellular side. Residues 287–308 (FMTIPAFFAKSSSIYNPLIYIC) traverse the membrane as a helical segment. Position 296 is an N6-(retinylidene)lysine (Lys296). Over 309–353 (MNKQFRHCMITTLCCGKNPFEEEEGASTTSKTEASSVSSSSVSPA) the chain is Cytoplasmic. 2 S-palmitoyl cysteine lipidation sites follow: Cys322 and Cys323. The interval 330 to 353 (EEEGASTTSKTEASSVSSSSVSPA) is disordered. Residues 334-353 (ASTTSKTEASSVSSSSVSPA) show a composition bias toward low complexity.

The protein belongs to the G-protein coupled receptor 1 family. Opsin subfamily. Phosphorylated on some or all of the serine and threonine residues present in the C-terminal region. In terms of processing, contains one covalently linked retinal chromophore.

The protein localises to the membrane. Its subcellular location is the cell projection. The protein resides in the cilium. It is found in the photoreceptor outer segment. Its function is as follows. Photoreceptor required for image-forming vision at low light intensity. While most salt water fish species use retinal as chromophore, most freshwater fish use 3-dehydroretinal, or a mixture of retinal and 3-dehydroretinal. Light-induced isomerization of 11-cis to all-trans retinal triggers a conformational change that activates signaling via G-proteins. Subsequent receptor phosphorylation mediates displacement of the bound G-protein alpha subunit by arrestin and terminates signaling. This Tetraodon nigroviridis (Spotted green pufferfish) protein is Rhodopsin (rho).